The following is a 236-amino-acid chain: Small ribosomal subunit protein uS3 (236 aa).

Residues 39–107 (IREFLTEELK…DTSLNIVEVR (69 aa)) enclose the KH type-2 domain. The segment at 214 to 236 (ASERRAVEGDNQGSSSNRRRENA) is disordered.

This sequence belongs to the universal ribosomal protein uS3 family. Part of the 30S ribosomal subunit. Forms a tight complex with proteins S10 and S14.

In terms of biological role, binds the lower part of the 30S subunit head. Binds mRNA in the 70S ribosome, positioning it for translation. This chain is Small ribosomal subunit protein uS3, found in Brucella abortus (strain S19).